The chain runs to 230 residues: Large ribosomal subunit protein uL1 (230 aa).

It belongs to the universal ribosomal protein uL1 family. Part of the 50S ribosomal subunit.

In terms of biological role, binds directly to 23S rRNA. The L1 stalk is quite mobile in the ribosome, and is involved in E site tRNA release. Functionally, protein L1 is also a translational repressor protein, it controls the translation of the L11 operon by binding to its mRNA. The polypeptide is Large ribosomal subunit protein uL1 (Bifidobacterium adolescentis (strain ATCC 15703 / DSM 20083 / NCTC 11814 / E194a)).